Consider the following 248-residue polypeptide: MELKVDTHTHTYASGHAYSTLIENAKSAKQNGLAMFCTTDHSESMPGAPHYWFFSNQRVLPRFIEDVAIIRGVESNIMNTQGEIDIHPSVDKNLDWVIASFHEPVFRPSDVATHTEALLNVIKGGRVDALGHLGNPNFDFDFEVVIQCAAEHNVAIEINNTTLKGNSRVGSVDRCYEIARIAKAKGAFITTGSDAHFCIDVGGLDLVSSLLGEVGVDSSKVITHSPQQFLAFLVLRGRQSIAEFSVFE.

The Zn(2+) site is built by H8, H10, H16, H41, E74, H102, H132, D194, and H196.

It belongs to the PHP family. The cofactor is Zn(2+).

The polypeptide is Probable phosphatase VS_II0429 (Vibrio atlanticus (strain LGP32) (Vibrio splendidus (strain Mel32))).